A 38-amino-acid chain; its full sequence is Large ribosomal subunit protein bL36c (38 aa).

Belongs to the bacterial ribosomal protein bL36 family.

It localises to the plastid. The protein localises to the apicoplast. This chain is Large ribosomal subunit protein bL36c (rpl36), found in Theileria parva (East coast fever infection agent).